The chain runs to 298 residues: Heterogeneous nuclear ribonucleoprotein C (298 aa).

Ala2 is subject to N-acetylalanine. Residues Lys8, Lys50, Lys89, and Lys94 each participate in a glycyl lysine isopeptide (Lys-Gly) (interchain with G-Cter in SUMO2) cross-link. Residues 16–87 (SRVFIGNLNT…QVLDINLAAE (72 aa)) form the RRM domain. Ser108 is subject to Phosphoserine. Disordered stretches follow at residues 131-177 (PPPP…VKGD) and 204-298 (EKEQ…EDDS). The short motif at 142 to 148 (PSKRQRV) is the Nuclear localization signal element. Residues Ser149 and Ser153 each carry the phosphoserine modification. Low complexity predominate over residues 162–173 (SKSGQRGSSSKS). Lys163 carries the post-translational modification N6-acetyllysine; alternate. Residue Lys163 forms a Glycyl lysine isopeptide (Lys-Gly) (interchain with G-Cter in SUMO2); alternate linkage. Residues 176–211 (GDDLQAIKKELTQIKQKVDSLLESLEKIEKEQSKQA) are a coiled coil. Lys209 participates in a covalent cross-link: Glycyl lysine isopeptide (Lys-Gly) (interchain with G-Cter in SUMO2). Ser214, Ser216, and Ser217 each carry phosphoserine. Residue Lys222 forms a Glycyl lysine isopeptide (Lys-Gly) (interchain with G-Cter in SUMO2) linkage. Residue Lys225 forms a Glycyl lysine isopeptide (Lys-Gly) (interchain with G-Cter in SUMO2); alternate linkage. Lys225 participates in a covalent cross-link: Glycyl lysine isopeptide (Lys-Gly) (interchain with G-Cter in SUMO1); alternate. A phosphoserine mark is found at Ser226, Ser231, Ser232, and Ser234. A compositionally biased stretch (basic and acidic residues) spans 235–246 (VKKDETNVKMES). Glycyl lysine isopeptide (Lys-Gly) (interchain with G-Cter in SUMO2) cross-links involve residues Lys236 and Lys237. Lys243 is covalently cross-linked (Glycyl lysine isopeptide (Lys-Gly) (interchain with G-Cter in SUMO2); alternate). Residue Lys243 forms a Glycyl lysine isopeptide (Lys-Gly) (interchain with G-Cter in SUMO); alternate linkage. Phosphoserine is present on residues Ser246 and Ser253. Positions 248 to 269 (AGADDSAEEGDLLDDDDNEDRG) are enriched in acidic residues. Residues 270–279 (DDQLELKDDE) are compositionally biased toward basic and acidic residues. Acidic residues predominate over residues 280 to 298 (KEPEEGEDDRDSANGEDDS). 2 positions are modified to phosphoserine: Ser291 and Ser298.

This sequence belongs to the RRM HNRPC family. RALY subfamily. In terms of assembly, tetramer composed of 3 copies of isoform C1 and 1 copy of isoform C2. Assembly of 3 tetramers with bound pre-mRNA gives rise to a 19S complex that interacts with HNRNPA2B1 tetramers. Component of the 40S hnRNP particle. Identified in the spliceosome C complex. Interacts with IGF2BP1. Interacts with PPIA/CYPA. Post-translationally, phosphorylated on Ser-253 and Ser-291 in resting cells. In terms of processing, sumoylated. Sumoylation reduces affinity for mRNA. Ubiquitinated and degraded after nucleo-cytoplasmic transport by YWHAE.

The protein localises to the nucleus. Functionally, binds pre-mRNA and nucleates the assembly of 40S hnRNP particles. Interacts with poly-U tracts in the 3'-UTR or 5'-UTR of mRNA and modulates the stability and the level of translation of bound mRNA molecules. Single HNRNPC tetramers bind 230-240 nucleotides. Trimers of HNRNPC tetramers bind 700 nucleotides. May play a role in the early steps of spliceosome assembly and pre-mRNA splicing. N6-methyladenosine (m6A) has been shown to alter the local structure in mRNAs and long non-coding RNAs (lncRNAs) via a mechanism named 'm(6)A-switch', facilitating binding of HNRNPC, leading to regulation of mRNA splicing. The protein is Heterogeneous nuclear ribonucleoprotein C of Rattus norvegicus (Rat).